A 211-amino-acid chain; its full sequence is Ribosomal RNA large subunit methyltransferase E (211 aa).

S-adenosyl-L-methionine is bound by residues Gly60, Trp62, Asp85, Asp101, and Asp126. Lys166 serves as the catalytic Proton acceptor.

It belongs to the class I-like SAM-binding methyltransferase superfamily. RNA methyltransferase RlmE family.

The protein localises to the cytoplasm. It catalyses the reaction uridine(2552) in 23S rRNA + S-adenosyl-L-methionine = 2'-O-methyluridine(2552) in 23S rRNA + S-adenosyl-L-homocysteine + H(+). Specifically methylates the uridine in position 2552 of 23S rRNA at the 2'-O position of the ribose in the fully assembled 50S ribosomal subunit. The polypeptide is Ribosomal RNA large subunit methyltransferase E (Bordetella petrii (strain ATCC BAA-461 / DSM 12804 / CCUG 43448)).